The primary structure comprises 473 residues: MSLSRRQFIQASGLAMCLGALPFAVQANKSQPTKLPLPPLLESRGGQPLFLAIQKARWSFNGQNKVQVWGINGHYLGPTIRVHRGDDVKLIYSNRLSEDVAMTVGGLLLPGTLMGGSTRLMSPGESWSPVIPINQPAATCWYHANTPNRTAQHVYAGLAGMCLVEDEDSRRLPLPKHYGVDDFPVILQDKRLDNFGVPQYDPPANQGFLGDTLIVNGVENPFVEVARGWVRLRLLNASNARRYQLQLSDGRPFYMIGTDQGLLPAPVAVQQLPLAPGERREVLVDMSKVENVSITAGESASVMDRLKGLFEPSTKLVSTTVLTLKASGLLPLVTDQLPNQLVGDNPQISSSIRSRQLTLGDYSQGINSSILNESRIDITSQQGAWERWIITTSVPQPFHIEGVRFKVISFNGNRPEPQDYGWKDTVWIDERAELLVNMMQPSYAHFPFMYYSQILEMVDRGVAGQLVVNPAGF.

Residues 1–27 constitute a signal peptide (tat-type signal); the sequence is MSLSRRQFIQASGLAMCLGALPFAVQA.

Belongs to the FtsP family. In terms of processing, predicted to be exported by the Tat system. The position of the signal peptide cleavage has not been experimentally proven.

It localises to the periplasm. In terms of biological role, cell division protein that is required for growth during stress conditions. May be involved in protecting or stabilizing the divisomal assembly under conditions of stress. This is Cell division protein FtsP from Xenorhabdus nematophila (strain ATCC 19061 / DSM 3370 / CCUG 14189 / LMG 1036 / NCIMB 9965 / AN6).